Reading from the N-terminus, the 147-residue chain is Microsomal glutathione S-transferase 2 (147 aa).

A run of 3 helical transmembrane segments spans residues 6–26 (SLLA…AWRV), 62–82 (VFIV…AACL), and 107–127 (GFRL…LGVA).

As to quaternary structure, homotrimer.

It localises to the endoplasmic reticulum membrane. Its subcellular location is the microsome membrane. The enzyme catalyses RX + glutathione = an S-substituted glutathione + a halide anion + H(+). It catalyses the reaction 1-chloro-2,4-dinitrobenzene + glutathione = 2,4-dinitrophenyl-S-glutathione + chloride + H(+). It carries out the reaction leukotriene C4 = leukotriene A4 + glutathione. The catalysed reaction is (5S)-hydroperoxy-(6E,8Z,11Z,14Z)-eicosatetraenoate + 2 glutathione = (5S)-hydroxy-(6E,8Z,11Z,14Z)-eicosatetraenoate + glutathione disulfide + H2O. With respect to regulation, each monomer binds on GSH molecule but only one subunit is catalytically active. Functionally, catalyzes several different glutathione-dependent reactions. Catalyzes the glutathione-dependent reduction of lipid hydroperoxides, such as 5-HPETE. Has glutathione transferase activity, toward xenobiotic electrophiles, such as 1-chloro-2, 4-dinitrobenzene (CDNB). Also catalyzes the conjugation of leukotriene A4 with reduced glutathione to form leukotriene C4 (LTC4). Involved in oxidative DNA damage induced by ER stress and anticancer agents by activating LTC4 biosynthetic machinery in nonimmune cells. The chain is Microsomal glutathione S-transferase 2 from Mus musculus (Mouse).